We begin with the raw amino-acid sequence, 3388 residues long: Genome polyprotein (3388 aa).

An interaction with host EXOC1 region spans residues 1-15 (MNDQRKKARNTPFNM). Topologically, residues 1 to 101 (MNDQRKKARN…LNILNRRRRT (101 aa)) are cytoplasmic. A hydrophobic; homodimerization of capsid protein C region spans residues 37–72 (MLQGRGPLKLFMALVAFLRFLTIPPTAGILKRWGTI). The propeptide at 101–114 (TAGMIIMLIPTVMA) is ER anchor for the capsid protein C, removed in mature form by serine protease NS3. The helical transmembrane segment at 102–122 (AGMIIMLIPTVMAFHLTTRNG) threads the bilayer. At 123 to 238 (EPHMIVSRQE…GAWKHAQRIE (116 aa)) the chain is on the extracellular side. N-linked (GlcNAc...) asparagine; by host glycosylation is present at asparagine 183. The helical transmembrane segment at 239-259 (TWILRHPGFTIMAAILAYTIG) threads the bilayer. The Cytoplasmic portion of the chain corresponds to 260-265 (TTHFQR). Residues 266–280 (VLIFILLTAIAPSMT) traverse the membrane as a helical segment. Topologically, residues 281–725 (MRCIGISNRD…LHQVFGAIYG (445 aa)) are extracellular. Intrachain disulfides connect cysteine 283–cysteine 310, cysteine 340–cysteine 401, cysteine 354–cysteine 385, and cysteine 372–cysteine 396. The N-linked (GlcNAc...) asparagine; by host glycan is linked to asparagine 347. The tract at residues 378–391 (DRGWGNGCGLFGKG) is fusion peptide. The N-linked (GlcNAc...) asparagine; by host glycan is linked to asparagine 433. 2 disulfide bridges follow: cysteine 465–cysteine 565 and cysteine 582–cysteine 613. Residues 726–746 (AAFSGVSWTMKILIGVIITWI) traverse the membrane as a helical segment. Residues 747-752 (GMNSRS) are Cytoplasmic-facing. A helical membrane pass occupies residues 753 to 773 (TSLSVSLVLVGIVTLYLGVMV). The Extracellular segment spans residues 774–1195 (QADSGCVVSW…MVGATMTDDI (422 aa)). 6 disulfides stabilise this stretch: cysteine 779–cysteine 790, cysteine 830–cysteine 918, cysteine 954–cysteine 998, cysteine 1055–cysteine 1104, cysteine 1066–cysteine 1088, and cysteine 1087–cysteine 1091. N-linked (GlcNAc...) asparagine; by host glycosylation is found at asparagine 905 and asparagine 982. Asparagine 1134 is a glycosylation site (N-linked (GlcNAc...) asparagine; by host). The chain crosses the membrane as a helical span at residues 1196 to 1220 (GMGVTYLALLAAFKVRPTFAAGLLL). Residues 1221-1226 (RKLTSK) are Cytoplasmic-facing. A helical membrane pass occupies residues 1227-1245 (ELMMTTIGIVLLSQSSIPE). Topologically, residues 1246-1269 (TILELTDALALGMMVLKMVRNMEK) are lumenal. Residues 1270–1290 (YQLAVTIMAILCVPNAVILQN) form a helical membrane-spanning segment. A topological domain (cytoplasmic) is located at residue alanine 1291. A helical transmembrane segment spans residues 1292-1310 (WKVSCTILAVVSVSPLFLT). Residues 1311 to 1317 (SSQQKAD) lie on the Lumenal side of the membrane. A helical transmembrane segment spans residues 1318-1338 (WIPLALTIKGLNPTAIFLTTL). The Cytoplasmic portion of the chain corresponds to 1339–1346 (SRTSKKRS). A helical transmembrane segment spans residues 1347-1367 (WPLNEAIMAVGMVSILASSLL). Topologically, residues 1368–1370 (KND) are lumenal. Residues 1371–1391 (TPMTGPLVAGGLLTVCYVLTG) form a helical membrane-spanning segment. At 1392–1447 (RSADLELERATDVKWDDQAEISGSSPILSITISEDGSMSIKNEEEEQTLTILIRTG) the chain is on the cytoplasmic side. Residues 1398–1437 (LERATDVKWDDQAEISGSSPILSITISEDGSMSIKNEEEE) form an interacts with and activates NS3 protease region. The helical intramembrane region spans 1448–1468 (LLVISGLFPVSIPITAAAWYL). Over 1469–2144 (WEVKKQRAGV…LSELPETLET (676 aa)) the chain is Cytoplasmic. The Peptidase S7 domain occupies 1476 to 1653 (AGVLWDVPSP…EKSIEDNPEI (178 aa)). Catalysis depends on charge relay system; for serine protease NS3 activity residues histidine 1526, aspartate 1550, and serine 1610. Residues 1655–1811 (DDIFRKRRLT…QSNAPIMDEE (157 aa)) form the Helicase ATP-binding domain. Positions 1659-1662 (RKRR) are important for RNA-binding. 1668-1675 (LHPGAGKT) is a binding site for ATP. Residues 1759 to 1762 (DEAH) carry the DEAH box motif. A Helicase C-terminal domain is found at 1821 to 1988 (SGHEWVTDFK…IIPSMFEPER (168 aa)). Lysine 1863 bears the N6-acetyllysine; by host mark. A helical transmembrane segment spans residues 2145-2165 (LLLLTLLATVTGGIFLFLMSG). Over 2166–2167 (RG) the chain is Lumenal. The helical intramembrane region spans 2168–2188 (IGKMTLGMCCIITASILLWYA). Position 2189 (glutamine 2189) is a topological domain, lumenal. The chain crosses the membrane as a helical span at residues 2190-2210 (IQPHWIAASIILEFFLIVLLI). Over 2211–2225 (PEPEKQRTPQDNQLT) the chain is Cytoplasmic. A helical membrane pass occupies residues 2226–2246 (YVIIAILTVVAATMANEMGFL). The Lumenal portion of the chain corresponds to 2247–2271 (EKTKKDLGLGNIATQQPESNILDID). The segment at residues 2272-2292 (LRPASAWTLYAVATTFITPML) is an intramembrane region (helical). At 2293–2313 (RHSIENSSVNVSLTAIANQAT) the chain is on the lumenal side. 2 N-linked (GlcNAc...) asparagine; by host glycosylation sites follow: asparagine 2298 and asparagine 2302. An intramembrane region (helical) is located at residues 2314–2334 (VLMGLGKGWPLSKMDIGVPLL). Topologically, residues 2335–2344 (AIGCYSQVNP) are lumenal. A helical membrane pass occupies residues 2345–2365 (ITLTAALLLLVAHYAIIGPGL). The Cytoplasmic portion of the chain corresponds to 2366-2410 (QAKATREAQKRAAAGIMKNPTVDGITVIDLDPIPYDPKFEKQLGQ). The helical transmembrane segment at 2411–2431 (VMLLVLCVTQVLMMRTTWALC) threads the bilayer. Topologically, residues 2432–2456 (EALTLATGPVSTLWEGNPGRFWNTT) are lumenal. A glycan (N-linked (GlcNAc...) asparagine; by host) is linked at asparagine 2454. Residues 2457–2477 (IAVSMANIFRGSYLAGAGLLF) traverse the membrane as a helical segment. The Cytoplasmic segment spans residues 2478-3388 (SIMKNTTSTR…REEEEAGVLW (911 aa)). The mRNA cap 0-1 NS5-type MT domain occupies 2490-2752 (TGNIGETLGE…DVDLGSGTRN (263 aa)). S-adenosyl-L-methionine is bound at residue serine 2544. Serine 2544 is modified (phosphoserine). The For 2'-O-MTase activity role is filled by lysine 2549. The SUMO-interacting motif signature appears at 2565-2568 (VVDL). Glycine 2574, tryptophan 2575, threonine 2592, lysine 2593, aspartate 2619, and valine 2620 together coordinate S-adenosyl-L-methionine. Residue aspartate 2634 is the For 2'-O-MTase activity of the active site. Isoleucine 2635 is a binding site for S-adenosyl-L-methionine. Residues lysine 2669 and glutamate 2705 each act as for 2'-O-MTase activity in the active site. Tyrosine 2707 serves as a coordination point for S-adenosyl-L-methionine. Zn(2+)-binding residues include glutamate 2926, histidine 2930, cysteine 2935, and cysteine 2938. One can recognise a RdRp catalytic domain in the interval 3017–3166 (AMYADDTAGW…PLDDRFARAL (150 aa)). Positions 3200, 3216, and 3335 each coordinate Zn(2+).

In the N-terminal section; belongs to the class I-like SAM-binding methyltransferase superfamily. mRNA cap 0-1 NS5-type methyltransferase family. As to quaternary structure, homodimer. Interacts (via N-terminus) with host EXOC1 (via C-terminus); this interaction results in EXOC1 degradation through the proteasome degradation pathway. Forms heterodimers with envelope protein E in the endoplasmic reticulum and Golgi. In terms of assembly, homodimer; in the endoplasmic reticulum and Golgi. Interacts with protein prM. Interacts with non-structural protein 1. As to quaternary structure, homodimer; Homohexamer when secreted. Interacts with envelope protein E. Interacts with host PRKAA1. Interacts (via N-terminus) with serine protease NS3. In terms of assembly, forms a heterodimer with serine protease NS3. May form homooligomers. As to quaternary structure, forms a heterodimer with NS2B. Interacts with NS4B. Interacts with unphosphorylated RNA-directed RNA polymerase NS5; this interaction stimulates RNA-directed RNA polymerase NS5 guanylyltransferase activity. Interacts with host SHFL. Interacts with host MAVS; this interaction inhibits the synthesis of IFN-beta. Interacts with host SHFL. Interacts with host AUP1; the interaction occurs in the presence of Dengue virus NS4B and induces lipophagy which facilitates production of virus progeny particles. May interact with host SRPRA and SEC61G. In terms of assembly, interacts with serine protease NS3. As to quaternary structure, homodimer. Interacts with host STAT2; this interaction inhibits the phosphorylation of the latter, and, when all viral proteins are present (polyprotein), targets STAT2 for degradation. Interacts with serine protease NS3. Interacts with host PAF1 complex; the interaction may prevent the recruitment of the PAF1 complex to interferon-responsive genes, and thus reduces the immune response. Specific enzymatic cleavages in vivo yield mature proteins. Cleavages in the lumen of endoplasmic reticulum are performed by host signal peptidase, whereas cleavages in the cytoplasmic side are performed by serine protease NS3. Signal cleavage at the 2K-4B site requires a prior NS3 protease-mediated cleavage at the 4A-2K site. In terms of processing, cleaved in post-Golgi vesicles by a host furin, releasing the mature small envelope protein M, and peptide pr. This cleavage is incomplete as up to 30% of viral particles still carry uncleaved prM. Post-translationally, N-glycosylated. N-glycosylated. The excreted form is glycosylated and this is required for efficient secretion of the protein from infected cells. In terms of processing, acetylated by host KAT5. Acetylation modulates NS3 RNA-binding and unwinding activities and plays an important positive role for viral replication. Post-translationally, sumoylation of RNA-directed RNA polymerase NS5 increases NS5 protein stability allowing proper viral RNA replication. Phosphorylated on serines residues. This phosphorylation may trigger NS5 nuclear localization.

The protein localises to the virion. Its subcellular location is the host nucleus. It is found in the host cytoplasm. The protein resides in the host perinuclear region. It localises to the secreted. The protein localises to the virion membrane. Its subcellular location is the host endoplasmic reticulum membrane. It is found in the host mitochondrion. The catalysed reaction is Selective hydrolysis of -Xaa-Xaa-|-Yaa- bonds in which each of the Xaa can be either Arg or Lys and Yaa can be either Ser or Ala.. It carries out the reaction RNA(n) + a ribonucleoside 5'-triphosphate = RNA(n+1) + diphosphate. The enzyme catalyses a ribonucleoside 5'-triphosphate + H2O = a ribonucleoside 5'-diphosphate + phosphate + H(+). It catalyses the reaction ATP + H2O = ADP + phosphate + H(+). The catalysed reaction is a 5'-end (5'-triphosphoguanosine)-ribonucleoside in mRNA + S-adenosyl-L-methionine = a 5'-end (N(7)-methyl 5'-triphosphoguanosine)-ribonucleoside in mRNA + S-adenosyl-L-homocysteine. It carries out the reaction a 5'-end (N(7)-methyl 5'-triphosphoguanosine)-ribonucleoside in mRNA + S-adenosyl-L-methionine = a 5'-end (N(7)-methyl 5'-triphosphoguanosine)-(2'-O-methyl-ribonucleoside) in mRNA + S-adenosyl-L-homocysteine + H(+). Its function is as follows. Plays a role in virus budding by binding to the cell membrane and gathering the viral RNA into a nucleocapsid that forms the core of a mature virus particle. During virus entry, may induce genome penetration into the host cytoplasm after hemifusion induced by the surface proteins. Can migrate to the cell nucleus where it modulates host functions. Overcomes the anti-viral effects of host EXOC1 by sequestering and degrading the latter through the proteasome degradation pathway. Functionally, inhibits RNA silencing by interfering with host Dicer. In terms of biological role, prevents premature fusion activity of envelope proteins in trans-Golgi by binding to envelope protein E at pH6.0. After virion release in extracellular space, gets dissociated from E dimers. Acts as a chaperone for envelope protein E during intracellular virion assembly by masking and inactivating envelope protein E fusion peptide. prM is the only viral peptide matured by host furin in the trans-Golgi network probably to avoid catastrophic activation of the viral fusion activity in acidic Golgi compartment prior to virion release. prM-E cleavage is inefficient, and many virions are only partially matured. These uncleaved prM would play a role in immune evasion. Its function is as follows. May play a role in virus budding. Exerts cytotoxic effects by activating a mitochondrial apoptotic pathway through M ectodomain. May display a viroporin activity. Functionally, binds to host cell surface receptor and mediates fusion between viral and cellular membranes. Envelope protein is synthesized in the endoplasmic reticulum in the form of heterodimer with protein prM. They play a role in virion budding in the ER, and the newly formed immature particle is covered with 60 spikes composed of heterodimer between precursor prM and envelope protein E. The virion is transported to the Golgi apparatus where the low pH causes dissociation of PrM-E heterodimers and formation of E homodimers. prM-E cleavage is inefficient, and many virions are only partially matured. These uncleaved prM would play a role in immune evasion. In terms of biological role, involved in immune evasion, pathogenesis and viral replication. Once cleaved off the polyprotein, is targeted to three destinations: the viral replication cycle, the plasma membrane and the extracellular compartment. Essential for viral replication. Required for formation of the replication complex and recruitment of other non-structural proteins to the ER-derived membrane structures. Excreted as a hexameric lipoparticle that plays a role against host immune response. Antagonizing the complement function. Binds to the host macrophages and dendritic cells. Inhibits signal transduction originating from Toll-like receptor 3 (TLR3). Mediates complement activation, which may contribute to the pathogenesis of the vascular leakage that occurs in severe dengue disease. Activates autophagy through the AMPK/ERK/mTOR signaling pathway. Mechanistically, acts as the assembly platform for STK11-AMPK interactions and promotes STK11-AMPK interactions. In turn, promotes phosphorylation of the AMPK kinase structural domain and activates AMPK, thereby positively regulating the AMPK/ERK/mTOR signaling pathway and inducing autophagy. Disrupts the host endothelial glycocalyx layer of host pulmonary microvascular endothelial cells, inducing degradation of sialic acid and shedding of heparan sulfate proteoglycans. NS1 induces expression of sialidases, heparanase, and activates cathepsin L, which activates heparanase via enzymatic cleavage. These effects are probably linked to the endothelial hyperpermeability observed in severe dengue disease. Its function is as follows. Component of the viral RNA replication complex that functions in virion assembly and antagonizes the host immune response. Functionally, required cofactor for the serine protease function of NS3. May have membrane-destabilizing activity and form viroporins. In terms of biological role, displays three enzymatic activities: serine protease, NTPase and RNA helicase. NS3 serine protease, in association with NS2B, performs its autocleavage and cleaves the polyprotein at dibasic sites in the cytoplasm: C-prM, NS2A-NS2B, NS2B-NS3, NS3-NS4A, NS4A-2K and NS4B-NS5. NS3 RNA helicase binds RNA and unwinds dsRNA in the 3' to 5' direction. Regulates the ATPase activity of the NS3 helicase activity. NS4A allows NS3 helicase to conserve energy during unwinding. Plays a role in the inhibition of the host innate immune response. Interacts with host MAVS and thereby prevents the interaction between RIGI and MAVS. In turn, IFN-beta production is impaired. Interacts with host AUP1 which mediates induction of lipophagy in host cells and facilitates production of virus progeny particles. Its function is as follows. Functions as a signal peptide for NS4B and is required for the interferon antagonism activity of the latter. Functionally, induces the formation of ER-derived membrane vesicles where the viral replication takes place. Inhibits interferon (IFN)-induced host STAT1 phosphorylation and nuclear translocation, thereby preventing the establishment of cellular antiviral state by blocking the IFN-alpha/beta pathway. In terms of biological role, replicates the viral (+) and (-) RNA genome, and performs the capping of genomes in the cytoplasm. NS5 methylates viral RNA cap at guanine N-7 and ribose 2'-O positions. Besides its role in RNA genome replication, also prevents the establishment of cellular antiviral state by blocking the interferon-alpha/beta (IFN-alpha/beta) signaling pathway. Inhibits host TYK2 and STAT2 phosphorylation, thereby preventing activation of JAK-STAT signaling pathway. May reduce immune responses by preventing the recruitment of the host PAF1 complex to interferon-responsive genes. This chain is Genome polyprotein, found in Aedimorphus (Red guenon).